A 346-amino-acid chain; its full sequence is Hexosaminidase D (346 aa).

Residue E141 is the Proton donor of the active site.

It belongs to the glycosyl hydrolase 20 family. Homodimer; disulfide-linked.

The protein localises to the cytoplasm. It localises to the nucleus. Its subcellular location is the extracellular vesicle. It carries out the reaction Hydrolysis of terminal non-reducing N-acetyl-D-hexosamine residues in N-acetyl-beta-D-hexosaminides.. With respect to regulation, inhibited by O-(2-acetamido-2-deoxy-D-glucopyranosylidene)amino N-phenylcarbamate (PUGNAc). Inhibited by galacto-NAG-thiazoline. In terms of biological role, has hexosaminidase activity. Responsible for the cleavage of the monosaccharides N-acetylglucosamine (GlcNAc) and N-acetylgalactosamine (GalNAc) from cellular substrates. Has a preference for galactosaminide over glucosaminide substrates. This is Hexosaminidase D from Bos taurus (Bovine).